A 154-amino-acid polypeptide reads, in one-letter code: Aspartate carbamoyltransferase regulatory chain (154 aa).

The Zn(2+) site is built by Cys-109, Cys-114, Cys-138, and Cys-141.

The protein belongs to the PyrI family. Contains catalytic and regulatory chains. It depends on Zn(2+) as a cofactor.

Functionally, involved in allosteric regulation of aspartate carbamoyltransferase. The polypeptide is Aspartate carbamoyltransferase regulatory chain (Yersinia enterocolitica serotype O:8 / biotype 1B (strain NCTC 13174 / 8081)).